The following is a 369-amino-acid chain: Tyrosyl-DNA phosphodiesterase 2 (369 aa).

Residues 1 to 17 (MELEARAEPRSPRAGRG) show a composition bias toward basic and acidic residues. Disordered stretches follow at residues 1 to 26 (MELEARAEPRSPRAGRGEEEEDEDEE) and 80 to 117 (AAAAGGGSAGPGSCIDLTADDTASNTSSSGADSKQQDD). Positions 99–112 (DDTASNTSSSGADS) are enriched in low complexity. The tract at residues 127–131 (NIDGL) is interaction with 5' end of substrate DNA. The Mg(2+) site is built by Asp129 and Glu159. The tract at residues 233–238 (HLESTR) is interaction with 5' end of substrate DNA. The active-site Proton donor/acceptor is the Asp269. Positions 271 to 273 (NLR) are interaction with 5' end of substrate DNA.

It belongs to the CCR4/nocturin family. TTRAP/TDP2 subfamily. The cofactor is Mg(2+). Mn(2+) serves as cofactor.

It localises to the nucleus. The protein localises to the PML body. In terms of biological role, DNA repair enzyme that can remove a variety of covalent adducts from DNA through hydrolysis of a 5'-phosphodiester bond, giving rise to DNA with a free 5' phosphate. Catalyzes the hydrolysis of dead-end complexes between DNA and the topoisomerase 2 (TOP2) active site tyrosine residue. Hydrolyzes 5'-phosphoglycolates on protruding 5' ends on DNA double-strand breaks (DSBs) due to DNA damage by radiation and free radicals. The 5'-tyrosyl DNA phosphodiesterase activity can enable the repair of TOP2-induced DSBs without the need for nuclease activity, creating a 'clean' DSB with 5'-phosphate termini that are ready for ligation. Also has 3'-tyrosyl DNA phosphodiesterase activity, but less efficiently and much slower than TDP1. This chain is Tyrosyl-DNA phosphodiesterase 2 (TDP2), found in Gallus gallus (Chicken).